A 288-amino-acid polypeptide reads, in one-letter code: Probable chromosome 1-partitioning protein ParB (288 aa).

It belongs to the ParB family.

Involved in chromosome partition. Localize to both poles of the predivisional cell following completion of DNA replication. Binds to the DNA origin of replication. This chain is Probable chromosome 1-partitioning protein ParB (parB1), found in Deinococcus radiodurans (strain ATCC 13939 / DSM 20539 / JCM 16871 / CCUG 27074 / LMG 4051 / NBRC 15346 / NCIMB 9279 / VKM B-1422 / R1).